Reading from the N-terminus, the 415-residue chain is ATP-dependent RNA helicase RhlB (415 aa).

Positions 9–37 (QRFSALPLHPIVRGALAKKGFDFCTPIQA) match the Q motif motif. In terms of domain architecture, Helicase ATP-binding spans 40–218 (LPISLNGRDV…FEDMNDPEYI (179 aa)). 53-60 (AQTGTGKT) is an ATP binding site. The DEAD box signature appears at 164-167 (DEAD). The Helicase C-terminal domain occupies 241–389 (DKMALLLTLM…VSQYETEALL (149 aa)).

Belongs to the DEAD box helicase family. RhlB subfamily. In terms of assembly, component of the RNA degradosome, which is a multiprotein complex involved in RNA processing and mRNA degradation.

It is found in the cytoplasm. The catalysed reaction is ATP + H2O = ADP + phosphate + H(+). In terms of biological role, DEAD-box RNA helicase involved in RNA degradation. Has RNA-dependent ATPase activity and unwinds double-stranded RNA. This is ATP-dependent RNA helicase RhlB from Haemophilus influenzae (strain PittGG).